The following is a 248-amino-acid chain: Gamma-glutamyl peptidase 2 (248 aa).

The region spanning 17 to 212 is the Glutamine amidotransferase type-1 domain; sequence SEFVKEMYGG…IDRVHKIKFV (196 aa). The active-site Nucleophile is Cys101. Catalysis depends on residues His191 and Glu193.

The protein belongs to the peptidase C26 family.

It localises to the cytoplasm. It is found in the cytosol. The catalysed reaction is an S-[(1E)-1-(hydroxyimino)-omega-(methylsulfanyl)alkyl]-L-glutathione + H2O = an S-[(1E)-1-(hydroxyimino)-omega-(methylsulfanyl)alkyl]-L-cysteinylglycine + L-glutamate. It catalyses the reaction (E)-1-(glutathione-S-yl)-2-(1H-indol-3-yl)acetohydroximate + H2O = (E)-1-(glycyl-L-cystein-S-yl)-2-(1H-indol-3-yl)acetohydroximate + L-glutamate. The enzyme catalyses 2-(glutathion-S-yl)-2-(1H-indol-3-yl)acetonitrile + H2O = 2-(glycyl-L-cystein-S-yl)-2-(1H-indol-3-yl)acetonitrile + L-glutamate. It carries out the reaction (Z)-1-(glutathione-S-yl)-2-phenylacetohydroximate + H2O = (Z)-1-(glycyl-L-cystein-S-yl)-2-phenylacetohydroximate + L-glutamate. It participates in secondary metabolite biosynthesis. Involved in glucosinolate biosynthesis. Hydrolyzes the gamma-glutamyl peptide bond of several glutathione (GSH) conjugates to produce Cys-Gly conjugates related to glucosinolates. The gamma-Glu-Cys-Gly-GSH conjugates are the sulfur-donating molecule in glucosinolate biosynthesis. In Arabidopsis thaliana (Mouse-ear cress), this protein is Gamma-glutamyl peptidase 2.